Reading from the N-terminus, the 418-residue chain is MKYSAPIRLNTLGAIASQHGVLVVIGMLLVVPMAFPLLPIIATYCAAIFVILLPLGRLQHVLATASSVAFAWLLTLRNPSKGLVEAGLGDDALHYMNAFYEFQQAYCCGPLDVLKTGIRSAGGGEPIFWFLSYSVAKLFDTPLLVWAVLIFISLMLAWIAIYRCSERFAYVVFVSYLSTITLYALQGSAIRQAVAAGLVMIALDLLIRRKLVSAAGVGLIAAGTHSSAAVVLLACAVVVLFLSRDYGMLARRSSGLGRVGRLIVLLALAAAGAVFGSAEFVMSKIQARLSESQTGSAWELQLAVEAVLACLFAWLLRIKLPREEKMAFLLFVVVCFSTSLFAPAVGARLFRYTYCFYIVYLCAFFFARQGESLGQKKTLASLLLLASFGWAIFIVSARYQGLFVSGGVIDHFLAGPFF.

A run of 10 helical transmembrane segments spans residues 21-41 (VLVV…LPII), 45-65 (CAAI…LATA), 142-162 (PLLV…IAIY), 170-190 (YVVF…GSAI), 222-242 (AGTH…VLFL), 262-282 (LIVL…EFVM), 296-316 (SAWE…AWLL), 326-346 (MAFL…PAVG), 347-367 (ARLF…FFFA), and 377-397 (KTLA…IVSA).

To S.marcescens SfuB.

The protein localises to the cell inner membrane. Functionally, probably involved in polymerization and/or export of exopolysaccharide EPS I which functions as a virulence factor. May play a role in export of EPS I or its intermediates across the membranes. This is EPS I polysaccharide export inner membrane protein EpsF (epsF) from Ralstonia nicotianae (strain ATCC BAA-1114 / GMI1000) (Ralstonia solanacearum).